We begin with the raw amino-acid sequence, 342 residues long: Selenide, water dikinase (342 aa).

Cysteine 13 is a catalytic residue. ATP is bound by residues lysine 16 and 44-46; that span reads SCD. A Mg(2+)-binding site is contributed by aspartate 47. ATP-binding positions include aspartate 64, aspartate 87, and 134-136; that span reads GHS. Mg(2+) is bound at residue aspartate 87. A Mg(2+)-binding site is contributed by aspartate 222.

Belongs to the selenophosphate synthase 1 family. Class I subfamily. In terms of assembly, homodimer. The cofactor is Mg(2+).

The catalysed reaction is hydrogenselenide + ATP + H2O = selenophosphate + AMP + phosphate + 2 H(+). In terms of biological role, synthesizes selenophosphate from selenide and ATP. The chain is Selenide, water dikinase from Agathobacter rectalis (strain ATCC 33656 / DSM 3377 / JCM 17463 / KCTC 5835 / VPI 0990) (Eubacterium rectale).